The sequence spans 302 residues: Putative peptide permease protein BMEII0861 (302 aa).

The tract at residues 1–22 is disordered; sequence MRSSIHASRLRKMGQSIPASTG. The next 5 membrane-spanning stretches (helical) occupy residues 38 to 58, 101 to 121, 147 to 167, 230 to 250, and 268 to 288; these read IFGL…PLWL, LLVA…IGAI, IFLL…VVVI, ILLE…AASW, and WQWL…NFIG. The 192-residue stretch at 97 to 288 folds into the ABC transmembrane type-1 domain; the sequence is GRISLLVAVS…LAVLAINFIG (192 aa).

This sequence belongs to the binding-protein-dependent transport system permease family. As to quaternary structure, the complex is composed of two ATP-binding proteins (BMEII0863 and BMEII0864), two transmembrane proteins (BMEII0860 and BMEII0861) and a solute-binding protein (BMEII0859).

The protein resides in the cell inner membrane. In terms of biological role, probably part of an ABC transporter complex that could be involved in peptide import. Probably responsible for the translocation of the substrate across the membrane. The chain is Putative peptide permease protein BMEII0861 from Brucella melitensis biotype 1 (strain ATCC 23456 / CCUG 17765 / NCTC 10094 / 16M).